The following is a 101-amino-acid chain: MAGQKIRIRLKAYDHEAIDASARKIVETVTRTGARVVGPVPLPTEKNVYCVIRSPHKYKDSREHFEMRTHKRLIDILEPTPKTVDALMRIDLPASVDVNIQ.

Belongs to the universal ribosomal protein uS10 family. As to quaternary structure, part of the 30S ribosomal subunit.

In terms of biological role, involved in the binding of tRNA to the ribosomes. In Saccharopolyspora erythraea (strain ATCC 11635 / DSM 40517 / JCM 4748 / NBRC 13426 / NCIMB 8594 / NRRL 2338), this protein is Small ribosomal subunit protein uS10.